A 119-amino-acid chain; its full sequence is Ribosome-binding factor A (119 aa).

This sequence belongs to the RbfA family. Monomer. Binds 30S ribosomal subunits, but not 50S ribosomal subunits or 70S ribosomes.

The protein localises to the cytoplasm. Functionally, one of several proteins that assist in the late maturation steps of the functional core of the 30S ribosomal subunit. Associates with free 30S ribosomal subunits (but not with 30S subunits that are part of 70S ribosomes or polysomes). Required for efficient processing of 16S rRNA. May interact with the 5'-terminal helix region of 16S rRNA. This Chlorobium limicola (strain DSM 245 / NBRC 103803 / 6330) protein is Ribosome-binding factor A.